A 315-amino-acid chain; its full sequence is Holliday junction branch migration complex subunit RuvB (315 aa).

The segment at methionine 1–tyrosine 168 is large ATPase domain (RuvB-L). Residues isoleucine 7, arginine 8, glycine 49, lysine 52, threonine 53, serine 54, glutamate 115–phenylalanine 117, arginine 158, tyrosine 168, and arginine 205 contribute to the ATP site. Threonine 53 contributes to the Mg(2+) binding site. Positions glutamine 169 to glycine 239 are small ATPAse domain (RuvB-S). Residues glutamate 242–isoleucine 315 are head domain (RuvB-H). Positions 297 and 302 each coordinate DNA.

Belongs to the RuvB family. In terms of assembly, homohexamer. Forms an RuvA(8)-RuvB(12)-Holliday junction (HJ) complex. HJ DNA is sandwiched between 2 RuvA tetramers; dsDNA enters through RuvA and exits via RuvB. An RuvB hexamer assembles on each DNA strand where it exits the tetramer. Each RuvB hexamer is contacted by two RuvA subunits (via domain III) on 2 adjacent RuvB subunits; this complex drives branch migration. In the full resolvosome a probable DNA-RuvA(4)-RuvB(12)-RuvC(2) complex forms which resolves the HJ.

It localises to the cytoplasm. The enzyme catalyses ATP + H2O = ADP + phosphate + H(+). Functionally, the RuvA-RuvB-RuvC complex processes Holliday junction (HJ) DNA during genetic recombination and DNA repair, while the RuvA-RuvB complex plays an important role in the rescue of blocked DNA replication forks via replication fork reversal (RFR). RuvA specifically binds to HJ cruciform DNA, conferring on it an open structure. The RuvB hexamer acts as an ATP-dependent pump, pulling dsDNA into and through the RuvAB complex. RuvB forms 2 homohexamers on either side of HJ DNA bound by 1 or 2 RuvA tetramers; 4 subunits per hexamer contact DNA at a time. Coordinated motions by a converter formed by DNA-disengaged RuvB subunits stimulates ATP hydrolysis and nucleotide exchange. Immobilization of the converter enables RuvB to convert the ATP-contained energy into a lever motion, pulling 2 nucleotides of DNA out of the RuvA tetramer per ATP hydrolyzed, thus driving DNA branch migration. The RuvB motors rotate together with the DNA substrate, which together with the progressing nucleotide cycle form the mechanistic basis for DNA recombination by continuous HJ branch migration. Branch migration allows RuvC to scan DNA until it finds its consensus sequence, where it cleaves and resolves cruciform DNA. In Mycoplasmopsis pulmonis (strain UAB CTIP) (Mycoplasma pulmonis), this protein is Holliday junction branch migration complex subunit RuvB.